The primary structure comprises 378 residues: Putative protein YbfL (378 aa).

This sequence belongs to the transposase 11 family.

The sequence is that of Putative protein YbfL (ybfL) from Escherichia coli (strain K12).